A 496-amino-acid polypeptide reads, in one-letter code: MDISISWVVIILLVLSYLILMEKWRAAKLPKNLPPGPPKLPVIGHLHLLGGGLPQHVLRGITQKYGPVAHVQLGEVSSVVLSSTEAARQAMKVLDPAFADRFVNIGSRIMWYDSEDIIFSRYNDHWRQIRKICVSELLSPKNVKSFGYIRQDEMARLIRLFESSEGAAINVSEEISKTVCTIVSRVAFGSVVKDQSLLLNLVKESLRMASGFELADLFPSSWLLNLLCFNKYRLWGMRRRLDNFLDGFLEEHRVKKSGEYGGEDIIDVLYRMQKDSQMKVPITNNGIKGFIYDVFSAGTDTSAATILWALSELMRNPEKMAKAQAEVREILKGKTNVDMAEVHELKYLRSVVKEALRLHPPFPIIPRLCIQESEVTGYTIPANTRILINVWSIGRDPLYWNEPDTFNPDRYDEVPRDIIGNDFELIPFGSGRRICPGLHFGLANIEVPLAQLLYHFDWKLPQGMTAADIDMTEKPGLSGPRKNPLILVPTIHNPTS.

Residues 1 to 21 (MDISISWVVIILLVLSYLILM) traverse the membrane as a helical; Signal-anchor for type II membrane protein segment. C435 provides a ligand contact to heme.

The protein belongs to the cytochrome P450 family. Heme is required as a cofactor. In terms of tissue distribution, expressed in flowers, leaves and stems, especially in glandular trichomes.

It is found in the membrane. The catalysed reaction is (4S)-limonene + reduced [NADPH--hemoprotein reductase] + O2 = (1S,5R)-carveol + oxidized [NADPH--hemoprotein reductase] + H2O + H(+). It carries out the reaction gamma-terpinene + 2 reduced [NADPH--hemoprotein reductase] + 2 O2 = carvacrol + 2 oxidized [NADPH--hemoprotein reductase] + 3 H2O + 2 H(+). The enzyme catalyses gamma-terpinene + 2 reduced [NADPH--hemoprotein reductase] + 2 O2 = thymol + 2 oxidized [NADPH--hemoprotein reductase] + 3 H2O + 2 H(+). It catalyses the reaction (4R)-limonene + reduced [NADPH--hemoprotein reductase] + O2 = (1R,6S)-isopiperitenol + oxidized [NADPH--hemoprotein reductase] + H2O + H(+). It participates in secondary metabolite biosynthesis; terpenoid biosynthesis. In terms of biological role, involved in the biosynthesis of phenolic monoterpenes natural products thymol and carvacrol which have a broad range of biological activities acting as antimicrobial compounds, insecticides, antioxidants and pharmaceutical agents. Catalyzes the C2- and C3-hydroxylation of gamma-terpinene to produce carvacrol and thymol, respectively. Also mediates the C6-hydroxylation of (4S)-limonene to form carveol and the C3-hydroxylation of (4R)-limonene to generate (+)-trans-isopiperitenol. The polypeptide is Cytochrome P450 71D178 (Origanum vulgare (Wild marjoram)).